Here is a 215-residue protein sequence, read N- to C-terminus: MNTQVWRVCVGVMLFCFVGRIGCAEEKMVREEGLAVADGIYAVMETNRGTIVLSLFFEKAPLTVCNFVGLAEGTLAVCKGRPFYQGLTFHRVIKDFMIQGGDPQGNGTGGPGYQFPDECDPALRHDSPGVLSMANAGPGTNGSQFFITHVATPWLDGKHTVFGKVVEGMEVVHAIIAGDTIRSLKIVRRGAAAKRFVCDQAQFDQLRKRVSAASK.

Residues 38 to 197 (DGIYAVMETN…RRGAAAKRFV (160 aa)) form the PPIase cyclophilin-type domain.

The protein belongs to the cyclophilin-type PPIase family.

The enzyme catalyses [protein]-peptidylproline (omega=180) = [protein]-peptidylproline (omega=0). Functionally, PPIases accelerate the folding of proteins. It catalyzes the cis-trans isomerization of proline imidic peptide bonds in oligopeptides. The chain is Probable peptidyl-prolyl cis-trans isomerase (ppiB) from Treponema pallidum (strain Nichols).